A 157-amino-acid chain; its full sequence is Urease accessory protein UreE (157 aa).

This sequence belongs to the UreE family.

The protein localises to the cytoplasm. Its function is as follows. Involved in urease metallocenter assembly. Binds nickel. Probably functions as a nickel donor during metallocenter assembly. This chain is Urease accessory protein UreE, found in Corynebacterium glutamicum (strain R).